Here is a 367-residue protein sequence, read N- to C-terminus: Endopolygalacturonase B (367 aa).

The signal sequence occupies residues 1–17 (MHFQLLGLAALGSLAAA). Positions 18–30 (APAPSRTSELVER) are excised as a propeptide. C34 and C49 are joined by a disulfide. PbH1 repeat units lie at residues 161 to 191 (GNDVHLTDITIDNSDGDNNGGHNTDAFDVSE), 192 to 213 (SNGVYITGANVKNQDDCLAINS), 214 to 234 (GENIEFTGATCSGGHGISIGS), 243 to 264 (VKNVKVADSTVVDSDNGIRIKT), and 272 to 294 (VSGVTYENITLKNIKKNGIVIEQ). Catalysis depends on D206, which acts as the Proton donor. C208 and C224 form a disulfide bridge. The active site involves H228. N279 carries N-linked (GlcNAc...) asparagine glycosylation. Intrachain disulfides connect C334-C339 and C358-C367.

The protein belongs to the glycosyl hydrolase 28 family.

It is found in the secreted. It catalyses the reaction (1,4-alpha-D-galacturonosyl)n+m + H2O = (1,4-alpha-D-galacturonosyl)n + (1,4-alpha-D-galacturonosyl)m.. Its function is as follows. Involved in maceration and soft-rotting of plant tissue. Hydrolyzes the 1,4-alpha glycosidic bonds of de-esterified pectate in the smooth region of the plant cell wall. In Aspergillus flavus (strain ATCC MYA-384 / AF70), this protein is Endopolygalacturonase B (pgaB).